Reading from the N-terminus, the 263-residue chain is Hydroxyethylthiazole kinase (263 aa).

Residue M39 participates in substrate binding. ATP is bound by residues K115 and T160. G187 serves as a coordination point for substrate.

This sequence belongs to the Thz kinase family. It depends on Mg(2+) as a cofactor.

The enzyme catalyses 5-(2-hydroxyethyl)-4-methylthiazole + ATP = 4-methyl-5-(2-phosphooxyethyl)-thiazole + ADP + H(+). It functions in the pathway cofactor biosynthesis; thiamine diphosphate biosynthesis; 4-methyl-5-(2-phosphoethyl)-thiazole from 5-(2-hydroxyethyl)-4-methylthiazole: step 1/1. In terms of biological role, catalyzes the phosphorylation of the hydroxyl group of 4-methyl-5-beta-hydroxyethylthiazole (THZ). This chain is Hydroxyethylthiazole kinase, found in Staphylococcus haemolyticus (strain JCSC1435).